The primary structure comprises 580 residues: MSCSWMIPVFAILAFVASAAQADVVEHTFNVATLSLPRICQPGNTSVTAVNGRVPGPQVEAREGDTVVIHVINDSPYNVTVHWHGVFQRGTPWADGPAMVTQCPIRPGHRYTYRFAVAGQEGTLWWHAHSSYMRATVYGALVIRPRRAGGYPFPTPYEEKTVLLGEWWNGDPVALESQSFSTGIPAPNADAYTINGMPGDSYLCPETTNRIAKFEVRRDKTYLLRIINAALNTAFFFKVAGHTFTVVAADASYTEPYATDVIVIAPGQTVDALMAADASPGCYHMAISSYQSAIPFPPRPAGFNGNTSTAIVEYVDATATTDAGSPVLPVMPKPNDTYTANQFYTSLTALIRPGRRTVPLTVDTRMLVTVGLGFSSCQPEQTQCNRSAPVVLANMNNVSFALPNTVSMLEALYRNTADGVYTRDFPDQPPVAFDYTSRGLLGNSPLASTGSPSTKVKTLRYNATVEMVLQNTALVGLESHPMHLHGFNFFVVAQGFGNNDGEAAGAGEFNLVNPQERNTVAVPTGGWAVIRFVADNPGMWAMHCHIDSHFAIGLAMVFEVESGPTPGTTLPPPPPDLPQC.

The first 22 residues, 1–22 (MSCSWMIPVFAILAFVASAAQA), serve as a signal peptide directing secretion. 2 Plastocyanin-like domains span residues 30–148 (NVAT…PRRA) and 158–317 (EEKT…YVDA). Asparagine 44 and asparagine 78 each carry an N-linked (GlcNAc...) asparagine glycan. 4 residues coordinate Cu cation: histidine 82, histidine 84, histidine 127, and histidine 129. N-linked (GlcNAc...) asparagine glycans are attached at residues asparagine 306, asparagine 335, asparagine 385, asparagine 397, and asparagine 462. The region spanning 424–564 (DFPDQPPVAF…AMVFEVESGP (141 aa)) is the Plastocyanin-like 3 domain. Residues histidine 480, histidine 483, histidine 485, histidine 543, cysteine 544, histidine 545, and histidine 549 each contribute to the Cu cation site.

Belongs to the multicopper oxidase family. Cu cation is required as a cofactor.

The protein localises to the secreted. It localises to the extracellular space. The protein resides in the apoplast. The catalysed reaction is 4 hydroquinone + O2 = 4 benzosemiquinone + 2 H2O. Functionally, lignin degradation and detoxification of lignin-derived products. The protein is Laccase-6 (LAC6) of Oryza sativa subsp. japonica (Rice).